We begin with the raw amino-acid sequence, 293 residues long: Ribonuclease HII (293 aa).

In terms of domain architecture, RNase H type-2 spans 81–271; sequence THIAGVDEAG…VREALGLPTG (191 aa). The a divalent metal cation site is built by Asp87, Glu88, and Asp180. Positions 273 to 293 are disordered; it reads PPSALQAELFPEAPSRTGVKS.

Belongs to the RNase HII family. Mn(2+) serves as cofactor. Requires Mg(2+) as cofactor.

It is found in the cytoplasm. It catalyses the reaction Endonucleolytic cleavage to 5'-phosphomonoester.. In terms of biological role, endonuclease that specifically degrades the RNA of RNA-DNA hybrids. The protein is Ribonuclease HII of Myxococcus xanthus (strain DK1622).